The following is an 89-amino-acid chain: Large ribosomal subunit protein bL27 (89 aa).

It belongs to the bacterial ribosomal protein bL27 family.

This chain is Large ribosomal subunit protein bL27, found in Cytophaga hutchinsonii (strain ATCC 33406 / DSM 1761 / CIP 103989 / NBRC 15051 / NCIMB 9469 / D465).